Reading from the N-terminus, the 215-residue chain is GTP-binding nuclear protein ran-1 (215 aa).

In terms of domain architecture, Small GTPase Ran-type spans 6-170 (GIPTFKLVLV…LWLARKLLGD (165 aa)). 17–24 (DGGTGKTT) lines the GTP pocket. The tract at residues 36–44 (KKYVATLGV) is switch-I. GTP contacts are provided by residues G67, 121-124 (NKVD), and 149-151 (SAK). Residues 67–83 (GQEKFGGLRDGYYIQGQ) form a switch-II region.

It belongs to the small GTPase superfamily. Ran family. As to quaternary structure, found in a nuclear export complex with RanGTP, exportin and pre-miRNA.

It is found in the nucleus. The protein localises to the chromosome. The protein resides in the centromere. Its subcellular location is the kinetochore. In terms of biological role, ran GTPase system comprises ran-1, ran-2 and ran-3 and is essential in nucleocytoplasmic transport. Ran-1 is a GTP-binding protein that mediates the interaction between mitotic chromosomes and kinetochore microtubules. Plays a crucial role in nuclear envelope assembly at the end of each cell division. Required for the import of protein into the nucleus and also for RNA export. RCC1 (ran-3)/Ran (ran-1) complex (together with other proteins) acts as a component of a signal transmission pathway that detects unreplicated DNA. The polypeptide is GTP-binding nuclear protein ran-1 (ran-1) (Caenorhabditis elegans).